The primary structure comprises 355 residues: Probable NADPH-dependent quinone reductase tdiC (355 aa).

The protein belongs to the zinc-containing alcohol dehydrogenase family. The cofactor is NADPH.

The protein operates within secondary metabolite biosynthesis. Probable NADPH-dependent quinone reductase; part of the gene cluster that mediates the biosynthesis of terrequinone A, an antitumor agent. The first step in the biosynthetic pathway for terrequinone A is formation of indole pyruvic acid (IPA) from L-tryptophan by the aminotransferase tdiD. The nonribosomal peptide synthase tdiA then immediately converts unstable IPA to didemethylasterriquinone D (DDAQ D), via condensation of 2 IPA molecules. The symmetric connectivity of the 2 IPA molecules is thought to arise by head-to-tail dual Claisen condensations facilitated by the TE domain. TdiB then catalyzes reverse prenylation by transferring dimethylallyl diphosphate to carbon atom 2' of DDAQ D, to yield asterriquinone C-1. Finally, tdiC and tdiE enzymes robustly convert asterriquinone C-1 to terrequinone A via a transformation involving regular prenylation at carbon atom 5, which requires elimination of the hydroxy group on C-5. The chain is Probable NADPH-dependent quinone reductase tdiC from Emericella nidulans (strain FGSC A4 / ATCC 38163 / CBS 112.46 / NRRL 194 / M139) (Aspergillus nidulans).